A 176-amino-acid chain; its full sequence is ATP-dependent protease subunit HslV (176 aa).

Residue Thr2 is part of the active site. Na(+)-binding residues include Gly157, Cys160, and Thr163.

The protein belongs to the peptidase T1B family. HslV subfamily. A double ring-shaped homohexamer of HslV is capped on each side by a ring-shaped HslU homohexamer. The assembly of the HslU/HslV complex is dependent on binding of ATP.

It localises to the cytoplasm. The enzyme catalyses ATP-dependent cleavage of peptide bonds with broad specificity.. With respect to regulation, allosterically activated by HslU binding. Its function is as follows. Protease subunit of a proteasome-like degradation complex believed to be a general protein degrading machinery. The polypeptide is ATP-dependent protease subunit HslV (Ectopseudomonas mendocina (strain ymp) (Pseudomonas mendocina)).